The primary structure comprises 486 residues: Probable glycine dehydrogenase (decarboxylating) subunit 2 (486 aa).

N6-(pyridoxal phosphate)lysine is present on K269.

This sequence belongs to the GcvP family. C-terminal subunit subfamily. As to quaternary structure, the glycine cleavage system is composed of four proteins: P, T, L and H. In this organism, the P 'protein' is a heterodimer of two subunits. Pyridoxal 5'-phosphate serves as cofactor.

The catalysed reaction is N(6)-[(R)-lipoyl]-L-lysyl-[glycine-cleavage complex H protein] + glycine + H(+) = N(6)-[(R)-S(8)-aminomethyldihydrolipoyl]-L-lysyl-[glycine-cleavage complex H protein] + CO2. The glycine cleavage system catalyzes the degradation of glycine. The P protein binds the alpha-amino group of glycine through its pyridoxal phosphate cofactor; CO(2) is released and the remaining methylamine moiety is then transferred to the lipoamide cofactor of the H protein. This is Probable glycine dehydrogenase (decarboxylating) subunit 2 from Chlorobaculum tepidum (strain ATCC 49652 / DSM 12025 / NBRC 103806 / TLS) (Chlorobium tepidum).